The following is a 634-amino-acid chain: Formate--tetrahydrofolate ligase (634 aa).

78–85 lines the ATP pocket; the sequence is TPLGEGKS.

This sequence belongs to the formate--tetrahydrofolate ligase family. As to quaternary structure, homodimer.

It carries out the reaction (6S)-5,6,7,8-tetrahydrofolate + formate + ATP = (6R)-10-formyltetrahydrofolate + ADP + phosphate. It participates in one-carbon metabolism; tetrahydrofolate interconversion. This Arabidopsis thaliana (Mouse-ear cress) protein is Formate--tetrahydrofolate ligase (THFS).